A 157-amino-acid chain; its full sequence is Transcriptional repressor NrdR (157 aa).

Residues 3–34 (CPKCNSTHSRVVDSRHADEANAIRRRRECENC) fold into a zinc finger. Residues 49–139 (LIVVKKDGTR…VYKEFKDVDQ (91 aa)) form the ATP-cone domain.

The protein belongs to the NrdR family. It depends on Zn(2+) as a cofactor.

Its function is as follows. Negatively regulates transcription of bacterial ribonucleotide reductase nrd genes and operons by binding to NrdR-boxes. The sequence is that of Transcriptional repressor NrdR from Staphylococcus carnosus (strain TM300).